Here is an 89-residue protein sequence, read N- to C-terminus: Acylphosphatase (89 aa).

An Acylphosphatase-like domain is found at 3–89; sequence RMTAWVHGFV…RGDLTGFVER (87 aa). Residues Arg18 and Asn36 contribute to the active site.

Belongs to the acylphosphatase family.

It catalyses the reaction an acyl phosphate + H2O = a carboxylate + phosphate + H(+). In Rhodococcus jostii (strain RHA1), this protein is Acylphosphatase (acyP).